Reading from the N-terminus, the 110-residue chain is Multidrug transporter EmrE (110 aa).

4 helical membrane passes run 4 to 21 (YIYL…TTLM), 34 to 52 (VGTI…QTLA), 58 to 80 (IAYA…GFFG), and 87 to 104 (AIIG…INLL).

It belongs to the drug/metabolite transporter (DMT) superfamily. Small multidrug resistance (SMR) (TC 2.A.7.1) family. In terms of assembly, homodimer. Forms an antiparallel dimeric structure. Also forms dimers of homodimers.

The protein localises to the cell inner membrane. Its activity is regulated as follows. Substrate identity influences both the ground-state and transition-state energies for the conformational exchange process, emphasizing the coupling between substrate binding and transport. Multidrug efflux protein that confers resistance to a wide range of toxic compounds, including ethidium, methyl viologen, acriflavine, tetraphenylphosphonium (TPP(+)), benzalkonium, propidium, dequalinium and the aminoglycoside antibiotics streptomycin and tobramycin. Can also transport the osmoprotectants betaine and choline. The drug efflux is coupled to an influx of protons. Can couple antiport of a drug to either one or two protons, performing both electrogenic and electroneutral transport of a single substrate. Simultaneously binds and cotransports proton and drug. This is Multidrug transporter EmrE (emrE) from Escherichia coli (strain K12).